The following is a 253-amino-acid chain: Ubiquinone/menaquinone biosynthesis C-methyltransferase UbiE (253 aa).

S-adenosyl-L-methionine contacts are provided by residues Thr76, Asp97, and 125-126 (NA).

Belongs to the class I-like SAM-binding methyltransferase superfamily. MenG/UbiE family.

It carries out the reaction a 2-demethylmenaquinol + S-adenosyl-L-methionine = a menaquinol + S-adenosyl-L-homocysteine + H(+). The enzyme catalyses a 2-methoxy-6-(all-trans-polyprenyl)benzene-1,4-diol + S-adenosyl-L-methionine = a 5-methoxy-2-methyl-3-(all-trans-polyprenyl)benzene-1,4-diol + S-adenosyl-L-homocysteine + H(+). It functions in the pathway quinol/quinone metabolism; menaquinone biosynthesis; menaquinol from 1,4-dihydroxy-2-naphthoate: step 2/2. Its pathway is cofactor biosynthesis; ubiquinone biosynthesis. Its function is as follows. Methyltransferase required for the conversion of demethylmenaquinol (DMKH2) to menaquinol (MKH2) and the conversion of 2-polyprenyl-6-methoxy-1,4-benzoquinol (DDMQH2) to 2-polyprenyl-3-methyl-6-methoxy-1,4-benzoquinol (DMQH2). The chain is Ubiquinone/menaquinone biosynthesis C-methyltransferase UbiE from Nitrobacter hamburgensis (strain DSM 10229 / NCIMB 13809 / X14).